The chain runs to 317 residues: Xylose/arabinose import permease protein XacH (317 aa).

Transmembrane regions (helical) follow at residues 40-60 (GIPF…NFAI), 98-118 (LVLL…LAIL), 132-152 (VYLL…LWMF), 179-199 (IALG…TMVV), 241-261 (AAVV…ALVG), and 290-310 (AAIA…YLYY). The region spanning 94-309 (AQNNLVLLVG…ALGVIGPYLY (216 aa)) is the ABC transmembrane type-1 domain.

The protein belongs to the binding-protein-dependent transport system permease family. As to quaternary structure, the complex is composed of two ATP-binding proteins (XacJ and XacK), two transmembrane proteins (XacH and XacI) and a solute-binding protein (XacG).

It is found in the cell membrane. Functionally, part of the ABC transporter complex XacGHIJK involved in the uptake of xylose and arabinose. Responsible for the translocation of the substrate across the membrane. The protein is Xylose/arabinose import permease protein XacH of Haloferax volcanii (strain ATCC 29605 / DSM 3757 / JCM 8879 / NBRC 14742 / NCIMB 2012 / VKM B-1768 / DS2) (Halobacterium volcanii).